The sequence spans 214 residues: Small ribosomal subunit protein uS5 (214 aa).

Residues methionine 1–arginine 61 form a disordered region. The segment covering asparagine 9–glutamine 29 has biased composition (low complexity). Residues glutamate 30–glutamate 60 are compositionally biased toward basic and acidic residues. The S5 DRBM domain occupies tryptophan 58–valine 121.

It belongs to the universal ribosomal protein uS5 family. Part of the 30S ribosomal subunit. Contacts proteins S4 and S8.

In terms of biological role, with S4 and S12 plays an important role in translational accuracy. Located at the back of the 30S subunit body where it stabilizes the conformation of the head with respect to the body. This Synechococcus sp. (strain CC9605) protein is Small ribosomal subunit protein uS5.